Consider the following 412-residue polypeptide: Lipid droplet organization protein LDO45 (412 aa).

The Cytoplasmic portion of the chain corresponds to 1–170 (MAARNRRKNN…TVEKLNALQN (170 aa)). The helical transmembrane segment at 171–191 (SLYEVFWIIFIYLNYWFPNVG) threads the bilayer. At 192 to 247 (DYVSNTFGQQDSIIIRISLSKSHFRALREKSSQKVQQAVKNIYFCFQEKPYLTAFK) the chain is on the lumenal side. Residues 248-268 (VSFAIGLVIPCSLLFLIMVST) form a helical membrane-spanning segment. Over 269–271 (ATF) the chain is Cytoplasmic. A helical transmembrane segment spans residues 272 to 292 (FFFVYLTLFVVIGFFSSLFII). Position 293 (Pro-293) is a topological domain, lumenal. The helical transmembrane segment at 294 to 314 (LLGISFVFAIGVVSFGFCSNM) threads the bilayer. Topologically, residues 315–412 (SFKMAQLIYV…NKAGNKFQLS (98 aa)) are cytoplasmic. The interval 347–374 (QEPQEPLSTLRPVSNPTIPSPLRQTARP) is disordered. A compositionally biased stretch (polar residues) spans 357-373 (RPVSNPTIPSPLRQTAR).

Interacts specifically with the seipin complex FLD1-LDB16. Only a fraction appears to associate with the seipin core components, suggesting that it may be an ancillary subunit of the complex.

The protein localises to the endoplasmic reticulum membrane. It localises to the lipid droplet. Involved in lipid droplet (LD) organization. Modulates triglyceride (TAG) storage by reducing DGA1 LD localization. Promotes LD targeting of some proteins, including PDR16. This Saccharomyces cerevisiae (strain ATCC 204508 / S288c) (Baker's yeast) protein is Lipid droplet organization protein LDO45.